The sequence spans 1057 residues: Desmoglein-1-alpha (1057 aa).

The first 23 residues, 1–23, serve as a signal peptide directing secretion; it reads MDWHSFRIAALLLTSLVVLEVNS. Residues 24–49 constitute a propeptide that is removed on maturation; sequence EFQIQVRDHNAKNGTIKWHSIRRQKR. 4 Cadherin domains span residues 50–157, 158–269, 270–389, and 386–493; these read EWIK…PPVF, SMTT…IPYL, EQSS…RPGS, and RPGS…TGSE. The Extracellular segment spans residues 50 to 564; sequence EWIKFAAACR…LYGDNVHFGP (515 aa). N-linked (GlcNAc...) asparagine glycosylation is found at Asn-110 and Asn-180. A disordered region spans residues 490-552; sequence TGSESGGSSS…FQGDPDETLE (63 aa). Polar residues predominate over residues 510–525; that stretch reads NGYQGTSSTENPQRVT. Residues 565 to 585 traverse the membrane as a helical segment; the sequence is AGIGLLIMGFLVLGLVPFLLI. Residues 586 to 1057 are Cytoplasmic-facing; that stretch reads CCDCGGAPGG…TKYNTVQYSK (472 aa). Desmoglein repeat repeat units follow at residues 832–858, 859–888, 889–918, 919–946, and 947–975; these read AYHSGPGVQHPVPIPDPLGYGNVTVRE, SYTTSGTLKPSVHFHDNQQASNVVVTERVV, GPISGADLHGMLEIPDLRGGANVIVTERVI, APGSSLPTSLTIPNPQETSNVVVTERVI, and QPTSGMIGNLSMTPELSSAHNVIVTERVV.

As to quaternary structure, binds to JUP/plakoglobin. Interacts with PKP2. Interacts with DSC3; there is evidence to suggest that the interaction promotes cell-cell adhesion of keratinocytes. As to expression, expressed in testis.

Its subcellular location is the cell membrane. It is found in the cell junction. It localises to the desmosome. The protein localises to the cytoplasm. The protein resides in the nucleus. Its function is as follows. Component of intercellular desmosome junctions. Involved in the interaction of plaque proteins and intermediate filaments mediating cell-cell adhesion. This chain is Desmoglein-1-alpha (Dsg1a), found in Mus musculus (Mouse).